Here is a 284-residue protein sequence, read N- to C-terminus: Acetyl-coenzyme A carboxylase carboxyl transferase subunit beta (284 aa).

One can recognise a CoA carboxyltransferase N-terminal domain in the interval 25 to 284 (LWVKCPETGA…LCKILTKSVQ (260 aa)).

This sequence belongs to the AccD/PCCB family. In terms of assembly, acetyl-CoA carboxylase is a heterohexamer composed of biotin carboxyl carrier protein (AccB), biotin carboxylase (AccC) and two subunits each of ACCase subunit alpha (AccA) and ACCase subunit beta (AccD).

It localises to the cytoplasm. It catalyses the reaction N(6)-carboxybiotinyl-L-lysyl-[protein] + acetyl-CoA = N(6)-biotinyl-L-lysyl-[protein] + malonyl-CoA. It functions in the pathway lipid metabolism; malonyl-CoA biosynthesis; malonyl-CoA from acetyl-CoA: step 1/1. Its function is as follows. Component of the acetyl coenzyme A carboxylase (ACC) complex. Biotin carboxylase (BC) catalyzes the carboxylation of biotin on its carrier protein (BCCP) and then the CO(2) group is transferred by the transcarboxylase to acetyl-CoA to form malonyl-CoA. The protein is Acetyl-coenzyme A carboxylase carboxyl transferase subunit beta of Liberibacter asiaticus (strain psy62).